Consider the following 355-residue polypeptide: cAMP-dependent protein kinase catalytic subunit PRKX (355 aa).

Residue Met1 is modified to N-acetylmethionine. The segment at 1–42 is disordered; it reads MEPPAGAAATVKDPDHDPVKTKVSAPAADPKPRTSSQKAGHS. Residues 46-300 form the Protein kinase domain; that stretch reads WDTIATVGTG…AEDIKRHRWF (255 aa). Residues 52-60 and Lys75 contribute to the ATP site; that span reads VGTGTFGRV. The active-site Proton acceptor is the Asp169. The residue at position 200 (Thr200) is a Phosphothreonine. Positions 301 to 355 constitute an AGC-kinase C-terminal domain; it reads RGVEWESVPQRKLKPPIVPKLSGDGDISNFETYPESELDKTPSVSDKDLETFKNF. Residues 316-355 are disordered; the sequence is PIVPKLSGDGDISNFETYPESELDKTPSVSDKDLETFKNF. Residues 337 to 355 are compositionally biased toward basic and acidic residues; it reads ELDKTPSVSDKDLETFKNF.

The protein belongs to the protein kinase superfamily. AGC Ser/Thr protein kinase family. cAMP subfamily. As to quaternary structure, like other cAMP-dependent protein kinases, the inactive holoenzyme is probably composed of 2 PRKX catalytic subunits and a dimer of regulatory subunits. Interacts (cAMP-dependent) specifically with the regulatory subunits PRKAR1A and PRKAR1B. Compared to other cAMP-dependent serine/threonine protein kinases, does not interact with the 2 other PKA regulatory subunits PRKAR2A and PRKAR2B. Interacts with PIN1 (via WW domain). Interacts with cAMP-dependent protein kinase inhibitor/PKI proteins; inhibits PRKX. Interacts with GPKOW. Interacts with SMAD6. Interacts with PKD1; involved in differentiation and controlled morphogenesis of the kidney. Post-translationally, phosphorylated; autophosphorylates in vitro. As to expression, widely expressed.

The protein localises to the cytoplasm. It localises to the nucleus. The enzyme catalyses L-seryl-[protein] + ATP = O-phospho-L-seryl-[protein] + ADP + H(+). The catalysed reaction is L-threonyl-[protein] + ATP = O-phospho-L-threonyl-[protein] + ADP + H(+). Its activity is regulated as follows. Binding of cAMP to the PRKAR1A or PRKAR1B regulatory subunits induces dissociation of the holoenzyme heterotetramer. The released monomeric PRKX is then active and able to phosphorylate its substrates. In terms of biological role, serine/threonine protein kinase regulated by and mediating cAMP signaling in cells. Acts through phosphorylation of downstream targets that may include CREB, SMAD6 and PKD1 and has multiple functions in cellular differentiation and epithelial morphogenesis. Regulates myeloid cell differentiation through SMAD6 phosphorylation. Involved in nephrogenesis by stimulating renal epithelial cell migration and tubulogenesis. Also involved in angiogenesis through stimulation of endothelial cell proliferation, migration and vascular-like structure formation. This is cAMP-dependent protein kinase catalytic subunit PRKX (Prkx) from Mus musculus (Mouse).